Reading from the N-terminus, the 419-residue chain is Tyrosine--tRNA ligase (419 aa).

Residue Y34 coordinates L-tyrosine. The short motif at 39–48 (PSGDSMHIGH) is the 'HIGH' region element. L-tyrosine contacts are provided by Y168 and Q172. A 'KMSKS' region motif is present at residues 230–234 (KFGKS). K233 is an ATP binding site. The S4 RNA-binding domain maps to 352–418 (ANLVDWLVTL…GKKKYFLVSY (67 aa)).

It belongs to the class-I aminoacyl-tRNA synthetase family. TyrS type 1 subfamily. As to quaternary structure, homodimer.

It localises to the cytoplasm. It carries out the reaction tRNA(Tyr) + L-tyrosine + ATP = L-tyrosyl-tRNA(Tyr) + AMP + diphosphate + H(+). Functionally, catalyzes the attachment of tyrosine to tRNA(Tyr) in a two-step reaction: tyrosine is first activated by ATP to form Tyr-AMP and then transferred to the acceptor end of tRNA(Tyr). In Listeria monocytogenes serotype 4b (strain CLIP80459), this protein is Tyrosine--tRNA ligase.